The sequence spans 608 residues: Zinc finger protein 652 (608 aa).

S57 carries the post-translational modification Phosphoserine. The disordered stretch occupies residues 61-232; it reads VLADTKMSKP…KRATKEAKAP (172 aa). Residues 71–97 show a composition bias toward basic and acidic residues; the sequence is HLHETEEQPYFREPRAVSDVHTVKEDR. Acidic residues-rich tracts occupy residues 98 to 108 and 151 to 162; these read ENSDDTEEEEE and EEDEEETEEEAT. Position 100 is a phosphoserine (S100). Residue T103 is modified to Phosphothreonine. Positions 194–208 are enriched in low complexity; that stretch reads AASAAAATTSPAPRT. S196 and S203 each carry phosphoserine. The C2H2-type 1 zinc finger occupies 244–267; sequence LTCEKCPRVFNTRWYLEKHMNVTH. The C2H2-type 2; degenerate zinc-finger motif lies at 271-293; it reads QICDKCGKKFVLESELSLHQQTD. C2H2-type zinc fingers lie at residues 298–321, 328–350, 356–378, 384–406, 412–434, and 440–462; these read IQCV…KIVH, FACE…MVAH, FTCE…SLQH, FRCE…MSIH, FMCQ…MKTH, and FICE…RRTH. A C2H2-type 9; degenerate zinc finger spans residues 468-491; sequence YPCDVCGQRFRFSNMLKAHKEKCF. The segment at 497–608 is mediates interaction with CBFA2T3; that stretch reads VNVPPAVQIP…KNSAAPAQHH (112 aa).

The protein belongs to the krueppel C2H2-type zinc-finger protein family. As to quaternary structure, interacts with CBFA2T3.

Its subcellular location is the nucleus. Its function is as follows. Functions as a transcriptional repressor. This Mus musculus (Mouse) protein is Zinc finger protein 652 (Znf652).